Consider the following 270-residue polypeptide: Regulator of G-protein signaling rgs-10 (270 aa).

The 118-residue stretch at 135–252 (SPETLAASEY…LEDPLYLDLV (118 aa)) folds into the RGS domain.

Functionally, shown to have a role in viability and embryogenesis. The sequence is that of Regulator of G-protein signaling rgs-10 (rgs-10) from Caenorhabditis elegans.